Here is a 720-residue protein sequence, read N- to C-terminus: F-box/LRR-repeat MAX2 homolog (720 aa).

The F-box domain occupies 14–60 (SSAILDLPEPLLLHILSFLTDVRSRHRAALACGRMRAAERATRSELS). LRR repeat units lie at residues 71–134 (LFLS…QNAF), 135–158 (IAAR…DPTT), 159–189 (LANL…PDGA), 190–218 (DLEP…DVVR), 219–247 (ALTT…FKSS), 248–279 (ELGP…VGDD), 280–316 (ALLS…ITVA), 317–344 (GLVA…EAAP), 345–372 (AMEA…KASW), 373–398 (LHLD…LTDA), 399–435 (SLAA…TLRP), 436–452 (TLKE…HTAE), 453–510 (CLTA…KCRY), 511–537 (MEFD…LLSP), 538–571 (LISA…PRTI), 572–606 (FGLS…GQMD), 607–644 (LSLW…SLTL), and 645–720 (PAVG…QIDD).

Associates to a SCF (SKP1-CUL1-F-box protein) E3 ubiquitin-protein ligase complex. Interacts with D14 in a strigolactone-dependent manner. Interacts with SKP1, SKP5 and SKP20. Expressed in leaves. Expressed in roots, culms, leaf blades, leaf sheaths, shoot bases and panicles.

It localises to the nucleus. Its function is as follows. Involved in strigolactone (SL) signaling. Required for responses to SLs and the establishment of arbuscular mycorrhiza symbiosis in rice. Strigolactone-dependent association of D3 with D14 and D53 (a repressor of SL signaling) triggers D53 ubiquitination and degradation. Controls tillering by suppressing axillary bud activity. Tiller is a specialized grain-bearing branch that is formed on the unelongated basal internode and grows independently of the mother stem (culm) by means of its own adventitious roots. The polypeptide is F-box/LRR-repeat MAX2 homolog (Oryza sativa subsp. japonica (Rice)).